Consider the following 145-residue polypeptide: MDLNFDLYMNDVVEQARNEIEHAGYHQLTSAEDVDQVLQQKGTSLVMVNSVCGCAGGIARPAAAHALHYDKLPQRLVTVFAGQDKEATQQAREYFEGYAPSSPSFALIKDGKITEMIERHQIEGHDVMDVINQLQALFDKYCEER.

It belongs to the bacilliredoxin family.

This Staphylococcus epidermidis (strain ATCC 35984 / DSM 28319 / BCRC 17069 / CCUG 31568 / BM 3577 / RP62A) protein is Bacilliredoxin SERP1075.